The primary structure comprises 448 residues: Adenylosuccinate synthetase (448 aa).

GTP contacts are provided by residues 22–28 (GDEGKGK) and 50–52 (GHT). Asp-23 acts as the Proton acceptor in catalysis. The Mg(2+) site is built by Asp-23 and Gly-50. IMP-binding positions include 23 to 26 (DEGK), 48 to 51 (NAGH), Thr-139, Arg-153, Gln-234, Thr-249, and Arg-321. Catalysis depends on His-51, which acts as the Proton donor. 317 to 323 (SVTGRPR) serves as a coordination point for substrate. Residues Arg-323, 349–351 (KLD), and 431–433 (STG) each bind GTP.

Belongs to the adenylosuccinate synthetase family. As to quaternary structure, homodimer. It depends on Mg(2+) as a cofactor.

Its subcellular location is the cytoplasm. The catalysed reaction is IMP + L-aspartate + GTP = N(6)-(1,2-dicarboxyethyl)-AMP + GDP + phosphate + 2 H(+). Its pathway is purine metabolism; AMP biosynthesis via de novo pathway; AMP from IMP: step 1/2. Plays an important role in the de novo pathway of purine nucleotide biosynthesis. Catalyzes the first committed step in the biosynthesis of AMP from IMP. The sequence is that of Adenylosuccinate synthetase from Burkholderia thailandensis (strain ATCC 700388 / DSM 13276 / CCUG 48851 / CIP 106301 / E264).